The chain runs to 151 residues: MHALQAKILDPRLGRDFPLPEYATPGSAGLDLRAMLQQDTVLEPGQTLLIPTGLAIHIADPTLAALVLPRSGLGHKHGIVLGNLVGLIDSDYQGELMVSCWNRGQSAFTIAVGERIAQLMLVPVVQARFELVDSFDSSDRGAGGFGHSGSH.

Residues 70-72 (RSG), Asn-83, 87-89 (LID), and Met-97 each bind substrate.

It belongs to the dUTPase family. Requires Mg(2+) as cofactor.

The catalysed reaction is dUTP + H2O = dUMP + diphosphate + H(+). The protein operates within pyrimidine metabolism; dUMP biosynthesis; dUMP from dCTP (dUTP route): step 2/2. Functionally, this enzyme is involved in nucleotide metabolism: it produces dUMP, the immediate precursor of thymidine nucleotides and it decreases the intracellular concentration of dUTP so that uracil cannot be incorporated into DNA. This chain is Deoxyuridine 5'-triphosphate nucleotidohydrolase, found in Stutzerimonas stutzeri (strain A1501) (Pseudomonas stutzeri).